The chain runs to 134 residues: Putative F-box protein R638 (134 aa).

The F-box domain maps to 5-52 (NIMNLLNEDCILHILSFLADKDKIQLSLSCKSNLKFLHKTIYDDIYFY).

The polypeptide is Putative F-box protein R638 (Acanthamoeba polyphaga mimivirus (APMV)).